The sequence spans 371 residues: S-adenosylmethionine:tRNA ribosyltransferase-isomerase (371 aa).

Belongs to the QueA family. As to quaternary structure, monomer.

The protein localises to the cytoplasm. It carries out the reaction 7-aminomethyl-7-carbaguanosine(34) in tRNA + S-adenosyl-L-methionine = epoxyqueuosine(34) in tRNA + adenine + L-methionine + 2 H(+). It functions in the pathway tRNA modification; tRNA-queuosine biosynthesis. Its function is as follows. Transfers and isomerizes the ribose moiety from AdoMet to the 7-aminomethyl group of 7-deazaguanine (preQ1-tRNA) to give epoxyqueuosine (oQ-tRNA). This chain is S-adenosylmethionine:tRNA ribosyltransferase-isomerase, found in Rickettsia akari (strain Hartford).